Reading from the N-terminus, the 107-residue chain is High mobility group protein HMG-I/HMG-Y (107 aa).

The interval 1–107 (MSESSSKSSQ…ISQESSEEEQ (107 aa)) is disordered. An N-acetylserine modification is found at Ser2. Lys7 is subject to N6-acetyllysine. Residue Ser8 is modified to ADP-ribosylserine. Ser9 is modified (ADP-ribosylserine; alternate). The residue at position 9 (Ser9) is a Phosphoserine; alternate. Position 15 is an N6-acetyllysine; alternate (Lys15). A Glycyl lysine isopeptide (Lys-Gly) (interchain with G-Cter in SUMO2); alternate cross-link involves residue Lys15. Basic and acidic residues predominate over residues 15–24 (KQEKDGTEKR). The segment at residues 21–31 (TEKRGRGRPRK) is a DNA-binding region (a.T hook 1). At Arg26 the chain carries Asymmetric dimethylarginine; alternate. Arg26 carries the post-translational modification Omega-N-methylarginine; alternate. Arg26 bears the Symmetric dimethylarginine; alternate mark. Ser36 bears the Phosphoserine; by HIPK2 and CDC2 mark. Phosphothreonine occurs at positions 39 and 42. Phosphoserine is present on residues Ser44 and Ser49. Phosphothreonine; by HIPK2 and CDC2 is present on Thr53. Residues 53 to 63 (TPKRPRGRPKG) constitute a DNA-binding region (a.T hook 2). Residues 53-77 (TPKRPRGRPKGSKNKGAAKTRKTTT) are interaction with HIPK2. Over residues 55-74 (KRPRGRPKGSKNKGAAKTRK) the composition is skewed to basic residues. 2 positions are modified to asymmetric dimethylarginine; by PRMT6; alternate: Arg58 and Arg60. Omega-N-methylarginine; by PRMT6; alternate is present on residues Arg58 and Arg60. A Phosphothreonine modification is found at Lys67. Thr78 is modified (phosphothreonine; by HIPK2 and CDC2). A DNA-binding region (a.T hook 3) is located at residues 78 to 89 (TPGRKPRGRPKK). Residues 93–107 (EEEEGISQESSEEEQ) are compositionally biased toward acidic residues. Ser99 bears the Phosphoserine mark. Phosphoserine; by CK occurs at positions 102 and 103.

This sequence belongs to the HMGA family. In terms of assembly, interacts with HIPK2. In terms of processing, constitutively phosphorylated on two or three sites. Hyperphosphorylated at early stages of apoptosis, followed by dephosphorylation and methylation, which coincides with chromatin condensation. Isoforms HMG-I and HMG-Y can be phosphorylated by HIPK2. Phosphorylation of HMG-I at Ser-36, Thr-53 and Thr-78 and of HMG-Y at Thr-42 and Thr-67 by HIPK2 modulates DNA-binding affinity. HMG-Y is not methylated. Post-translationally, methylation at Arg-58 is mutually exclusive with methylation at Arg-60.

It is found in the nucleus. The protein localises to the chromosome. Its function is as follows. HMG-I/Y bind preferentially to the minor groove of A+T rich regions in double-stranded DNA. It is suggested that these proteins could function in nucleosome phasing and in the 3'-end processing of mRNA transcripts. They are also involved in the transcription regulation of genes containing, or in close proximity to A+T-rich regions. The sequence is that of High mobility group protein HMG-I/HMG-Y (HMGA1) from Homo sapiens (Human).